Reading from the N-terminus, the 572-residue chain is Sulfite reductase [NADPH] hemoprotein beta-component (572 aa).

Residues cysteine 437, cysteine 443, cysteine 482, and cysteine 486 each coordinate [4Fe-4S] cluster. Cysteine 486 is a binding site for siroheme.

This sequence belongs to the nitrite and sulfite reductase 4Fe-4S domain family. As to quaternary structure, alpha(8)-beta(8). The alpha component is a flavoprotein, the beta component is a hemoprotein. Siroheme serves as cofactor. Requires [4Fe-4S] cluster as cofactor.

It catalyses the reaction hydrogen sulfide + 3 NADP(+) + 3 H2O = sulfite + 3 NADPH + 4 H(+). Its pathway is sulfur metabolism; hydrogen sulfide biosynthesis; hydrogen sulfide from sulfite (NADPH route): step 1/1. Component of the sulfite reductase complex that catalyzes the 6-electron reduction of sulfite to sulfide. This is one of several activities required for the biosynthesis of L-cysteine from sulfate. In Staphylococcus epidermidis (strain ATCC 35984 / DSM 28319 / BCRC 17069 / CCUG 31568 / BM 3577 / RP62A), this protein is Sulfite reductase [NADPH] hemoprotein beta-component.